Reading from the N-terminus, the 388-residue chain is Na(+)/H(+) antiporter NhaA (388 aa).

A run of 12 helical transmembrane segments spans residues 14-34 (TIGI…NSPL), 59-79 (LLLW…GLEI), 95-115 (TFPA…FASL), 125-145 (GWAI…SLLG), 154-174 (VFLM…IALF), 177-197 (TKLS…LFIM), 200-220 (MCVI…VSVL), 222-242 (SGVH…YRIN), 257-277 (GLHL…NAGV), 295-315 (IMLG…YLAV), 328-348 (LIQF…SLFI), and 362-382 (ADKL…YIVL).

It belongs to the NhaA Na(+)/H(+) (TC 2.A.33) antiporter family.

Its subcellular location is the cell inner membrane. The catalysed reaction is Na(+)(in) + 2 H(+)(out) = Na(+)(out) + 2 H(+)(in). In terms of biological role, na(+)/H(+) antiporter that extrudes sodium in exchange for external protons. In Nitratiruptor sp. (strain SB155-2), this protein is Na(+)/H(+) antiporter NhaA.